The chain runs to 208 residues: Putative dioxygenase RBE_0329 (208 aa).

This sequence belongs to the intradiol ring-cleavage dioxygenase family.

This chain is Putative dioxygenase RBE_0329, found in Rickettsia bellii (strain RML369-C).